Consider the following 543-residue polypeptide: Aspartate/alanine antiporter (543 aa).

Transmembrane regions (helical) follow at residues Ile4–Leu26, Ser33–Phe55, Phe88–Cys110, Gly117–Leu139, Ile159–Leu178, Ile362–Val381, Val385–Ile407, Ser428–Ile450, Ile455–Tyr477, and Val520–Leu542.

It belongs to the AAE transporter (TC 2.A.81) family.

Its subcellular location is the cell membrane. Functionally, catalyzes the electrogenic exchange of aspartate with alanine. This chain is Aspartate/alanine antiporter (aspT), found in Tetragenococcus halophilus (Pediococcus halophilus).